Consider the following 502-residue polypeptide: 4,4'-diapophytoene desaturase (4,4'-diaponeurosporene-forming) (502 aa).

Position 5–17 (5–17 (VIGAGVTGLAAAA)) interacts with FAD.

This sequence belongs to the carotenoid/retinoid oxidoreductase family. CrtN subfamily.

The enzyme catalyses 15-cis-4,4'-diapophytoene + 3 FAD + 3 H(+) = all-trans-4,4'-diaponeurosporene + 3 FADH2. It participates in carotenoid biosynthesis; staphyloxanthin biosynthesis; staphyloxanthin from farnesyl diphosphate: step 2/5. Its function is as follows. Involved in the biosynthesis of the yellow-orange carotenoid staphyloxanthin, which plays a role in the virulence via its protective function against oxidative stress. Catalyzes three successive dehydrogenation reactions that lead to the introduction of three double bonds into 4,4'-diapophytoene (dehydrosqualene), with 4,4'-diapophytofluene and 4,4'-diapo-zeta-carotene as intermediates, and 4,4'-diaponeurosporene (the major deep-yellow pigment in staphylococci strains) as the end product. The polypeptide is 4,4'-diapophytoene desaturase (4,4'-diaponeurosporene-forming) (Staphylococcus aureus (strain USA300)).